The sequence spans 147 residues: Protein-export protein SecB (147 aa).

It belongs to the SecB family. As to quaternary structure, homotetramer, a dimer of dimers. One homotetramer interacts with 1 SecA dimer.

Its subcellular location is the cytoplasm. Its function is as follows. One of the proteins required for the normal export of preproteins out of the cell cytoplasm. It is a molecular chaperone that binds to a subset of precursor proteins, maintaining them in a translocation-competent state. It also specifically binds to its receptor SecA. This is Protein-export protein SecB from Neisseria meningitidis serogroup C (strain 053442).